Consider the following 583-residue polypeptide: Proline--tRNA ligase (583 aa).

This sequence belongs to the class-II aminoacyl-tRNA synthetase family. ProS type 1 subfamily. In terms of assembly, homodimer.

The protein localises to the cytoplasm. It catalyses the reaction tRNA(Pro) + L-proline + ATP = L-prolyl-tRNA(Pro) + AMP + diphosphate. Catalyzes the attachment of proline to tRNA(Pro) in a two-step reaction: proline is first activated by ATP to form Pro-AMP and then transferred to the acceptor end of tRNA(Pro). As ProRS can inadvertently accommodate and process non-cognate amino acids such as alanine and cysteine, to avoid such errors it has two additional distinct editing activities against alanine. One activity is designated as 'pretransfer' editing and involves the tRNA(Pro)-independent hydrolysis of activated Ala-AMP. The other activity is designated 'posttransfer' editing and involves deacylation of mischarged Ala-tRNA(Pro). The misacylated Cys-tRNA(Pro) is not edited by ProRS. The chain is Proline--tRNA ligase from Aromatoleum aromaticum (strain DSM 19018 / LMG 30748 / EbN1) (Azoarcus sp. (strain EbN1)).